Consider the following 279-residue polypeptide: Protein ABIL4 (279 aa).

2 disordered regions span residues 192–211 and 219–241; these read VHNN…PMRF and LLKR…EPQR. The span at 194–208 shows a compositional bias: polar residues; it reads NNINNRTPNKRSNSP. A compositionally biased stretch (low complexity) spans 219 to 228; that stretch reads LLKRSSSPSQ.

Belongs to the ABI family. As to quaternary structure, binds SCAR.

The protein resides in the cytoplasm. It is found in the cytoskeleton. Functionally, involved in regulation of actin and microtubule organization. Part of a WAVE complex that activates the Arp2/3 complex. The sequence is that of Protein ABIL4 (ABIL4) from Arabidopsis thaliana (Mouse-ear cress).